Here is a 1091-residue protein sequence, read N- to C-terminus: MASESKSYARRDRLLEIEATVRKWWEDEDVFRAESCENLPKPGEKFFSTFPFPYMNGYLHIGHAFSLSKVDFASAYHRLRGANVLLPFGFHCTGMPIKASADKLRREIEQFGNPPVFTAEDTTKVPEVQEESSDTIALPIPGQFKGKKSKVAAKAGGQVYQWEIMRSFGLTDSEIANFREPSEWLYYFPPLAVEDLRAYGLGCDWRRSFVTTDVNPFFDAFVRWQMRKLKSMGKIVKDRRYTIFSPLDGQPCADHDRATGEGVQPQEYTLIKMEVVKPFPLKLGPLEGKRVFLAAATLRPETMYGQTNAWVLPDGKYGAYEISETEVFILTERAALNLAYQNFSKNPQEPSCLVELTGYDLIGLPLRSPLSVNEIIYALPMLTILTNKGTGIVTSVPSDAPDDYMALQDLIKKPALQDKYGVKTEWLPTEIIPIINIPEFGDKAAEKVCLDLKIKSQNDKEKLAEAKRLTYLKGFTEGTMLIGEFFGRKVQEIKPIIKTKLIETGEAIIYSEPEKPVMSRSGDECVVALTDQWYITYGESEWRKIAEECLSKMNLYSDETRHGFEHTLSWLNQWACSRSFGLGTRIPWDEQFLVESLSDSSLYMAYYTVAHIFHDGDMYKGSKSLIRPQQMNDEVWEYLFCDGPYPKSSDIPSAVLSEMKQEFDYWYPLDLRVSGKDLIQNHLTFFIYNHTALMANRNWPRGIRCNGHIMLNSEKMSKSTGNFRTLRQSIEEFSATGTRFCLADAGDGVDDANFAFETANAAILRLTKELTWMEEVLDVESSLRTGPPSTYADKVFENDMNIALRLTERAYKDCLFREALKNGFYDLQAARDEYRLSCGTGGMHHDLLLKFMDVQTRLIVPICPHFADYVWRKVLNKEGCVLTAGWPPSNEPDLVLKSANKYLQDSIVLMRKLLQKQLSGSKKGAKKGAQVTAVPEGKLKGLVYVNEQFDGWRAHCLRILQSRFDQQTCSFPPDTEMLAELSATLLQEGKNLKAIQKVCMPFLKFKKDEAISIGTQALNLRLPFGEIEVLQSNKDLIRRQLGLEEVEIYSASDPDDVSIAGPHASLLTQNPPSPGSPTAIFVTSTSVCPPS.

The 'HIGH' region signature appears at 53-63; the sequence is PYMNGYLHIGH. The short motif at 715–719 is the 'KMSKS' region element; sequence KMSKS. Position 718 (Lys718) interacts with ATP.

It belongs to the class-I aminoacyl-tRNA synthetase family.

The protein resides in the cytoplasm. The protein localises to the cytosol. It catalyses the reaction tRNA(Leu) + L-leucine + ATP = L-leucyl-tRNA(Leu) + AMP + diphosphate. Catalyzes the specific attachment of an amino acid to its cognate tRNA in a two step reaction: the amino acid (AA) is first activated by ATP to form AA-AMP and then transferred to the acceptor end of the tRNA. This chain is Leucine--tRNA ligase, cytoplasmic, found in Arabidopsis thaliana (Mouse-ear cress).